The sequence spans 340 residues: Arginase 1, mitochondrial (340 aa).

Residues 1–24 (MGGVAAGTRWIHHVRRLSAAKVST) constitute a mitochondrion transit peptide. Mn(2+) contacts are provided by H159, D183, H185, and D187. Substrate is bound by residues 185–189 (HPDIY) and 193–195 (EGN). The Mn(2+) site is built by D268 and D270. Residue E311 participates in substrate binding.

The protein belongs to the arginase family. Mn(2+) serves as cofactor.

The protein resides in the mitochondrion. It catalyses the reaction L-arginine + H2O = urea + L-ornithine. It functions in the pathway nitrogen metabolism; urea cycle; L-ornithine and urea from L-arginine: step 1/1. In terms of biological role, catalyzes the hydrolysis of L-arginine to urea and L-ornithine. The latter can be utilized in the urea cycle or as a precursor for the synthesis of both polyamines and proline. The protein is Arginase 1, mitochondrial of Oryza sativa subsp. indica (Rice).